Reading from the N-terminus, the 187-residue chain is Peptidyl-tRNA hydrolase (187 aa).

Residue Y14 coordinates tRNA. Residue H19 is the Proton acceptor of the active site. TRNA-binding residues include Y60, N62, and N108.

The protein belongs to the PTH family. In terms of assembly, monomer.

Its subcellular location is the cytoplasm. The catalysed reaction is an N-acyl-L-alpha-aminoacyl-tRNA + H2O = an N-acyl-L-amino acid + a tRNA + H(+). Functionally, hydrolyzes ribosome-free peptidyl-tRNAs (with 1 or more amino acids incorporated), which drop off the ribosome during protein synthesis, or as a result of ribosome stalling. Catalyzes the release of premature peptidyl moieties from peptidyl-tRNA molecules trapped in stalled 50S ribosomal subunits, and thus maintains levels of free tRNAs and 50S ribosomes. This is Peptidyl-tRNA hydrolase from Mycoplasmopsis synoviae (strain 53) (Mycoplasma synoviae).